Consider the following 91-residue polypeptide: Small ribosomal subunit protein uS19m (91 aa).

It belongs to the universal ribosomal protein uS19 family. Component of the mitochondrial small ribosomal subunit (mt-SSU). Mature yeast 74S mitochondrial ribosomes consist of a small (37S) and a large (54S) subunit. The 37S small subunit contains a 15S ribosomal RNA (15S mt-rRNA) and 34 different proteins. The 54S large subunit contains a 21S rRNA (21S mt-rRNA) and 46 different proteins.

Its subcellular location is the mitochondrion. Its function is as follows. Component of the mitochondrial ribosome (mitoribosome), a dedicated translation machinery responsible for the synthesis of mitochondrial genome-encoded proteins, including at least some of the essential transmembrane subunits of the mitochondrial respiratory chain. The mitoribosomes are attached to the mitochondrial inner membrane and translation products are cotranslationally integrated into the membrane. The sequence is that of Small ribosomal subunit protein uS19m (RSM19) from Saccharomyces cerevisiae (strain ATCC 204508 / S288c) (Baker's yeast).